The primary structure comprises 526 residues: piRNA biogenesis factor prde-1 (526 aa).

The tract at residues 436–526 (EAKEEPIDKK…RRRGCEIRRK (91 aa)) is disordered. Over residues 439–448 (EEPIDKKKDP) the composition is skewed to basic and acidic residues. Residues 458 to 467 (GKKRRGRKPK) are compositionally biased toward basic residues. Residues 468-487 (KKDDPKMELKDEVKDLKDFV) are compositionally biased toward basic and acidic residues. Low complexity predominate over residues 489–498 (EESTSASSSA).

As to expression, expressed in male and female germ cells.

The protein localises to the nucleus. It localises to the chromosome. Functionally, nuclear factor required for the production of piwi-interacting RNA (piRNA) precursors. Specifically required for piRNAs produced from loci associated with the Ruby motif. Promotes binding of the transcription factor snpc-4 at piRNA genomic clusters. Required for normal fertility. The protein is piRNA biogenesis factor prde-1 of Caenorhabditis elegans.